The sequence spans 414 residues: D-mannose isomerase (414 aa).

Active-site proton donor/acceptor residues include His-255 and His-390.

It belongs to the N-acylglucosamine 2-epimerase family. In terms of assembly, monomer.

The enzyme catalyses D-mannose = D-fructose. Strongly inhibited by Ag(2+), Cu(2+) and cetyltrimethyl ammonium bromide (CTAB). Catalyzes the reversible isomerization of D-mannose to D-fructose. Shows high specific activity towards mannose and fructose, and has no detectable activity towards other monosaccharides and disaccharides. In Pseudomonas cannabina pv. alisalensis, this protein is D-mannose isomerase.